The primary structure comprises 401 residues: 1-deoxy-D-xylulose 5-phosphate reductoisomerase (401 aa).

Residues Thr10, Gly11, Ser12, Ile13, Gly36, Asn38, and Asn124 each contribute to the NADPH site. 1-deoxy-D-xylulose 5-phosphate is bound at residue Lys125. Glu126 contacts NADPH. Asp150 lines the Mn(2+) pocket. Positions 151, 152, 186, and 209 each coordinate 1-deoxy-D-xylulose 5-phosphate. Glu152 is a binding site for Mn(2+). Gly215 contributes to the NADPH binding site. Ser222, Asn227, Lys228, and Glu231 together coordinate 1-deoxy-D-xylulose 5-phosphate. Glu231 contributes to the Mn(2+) binding site.

It belongs to the DXR family. Mg(2+) is required as a cofactor. Requires Mn(2+) as cofactor.

It carries out the reaction 2-C-methyl-D-erythritol 4-phosphate + NADP(+) = 1-deoxy-D-xylulose 5-phosphate + NADPH + H(+). It participates in isoprenoid biosynthesis; isopentenyl diphosphate biosynthesis via DXP pathway; isopentenyl diphosphate from 1-deoxy-D-xylulose 5-phosphate: step 1/6. In terms of biological role, catalyzes the NADPH-dependent rearrangement and reduction of 1-deoxy-D-xylulose-5-phosphate (DXP) to 2-C-methyl-D-erythritol 4-phosphate (MEP). This chain is 1-deoxy-D-xylulose 5-phosphate reductoisomerase, found in Vibrio parahaemolyticus serotype O3:K6 (strain RIMD 2210633).